A 408-amino-acid chain; its full sequence is Acetylornithine aminotransferase (408 aa).

Pyridoxal 5'-phosphate is bound by residues 107–108 (GT) and Phe-141. Arg-144 contributes to the N(2)-acetyl-L-ornithine binding site. 227-230 (DEIQ) is a binding site for pyridoxal 5'-phosphate. At Lys-256 the chain carries N6-(pyridoxal phosphate)lysine. Thr-284 serves as a coordination point for N(2)-acetyl-L-ornithine. Thr-285 lines the pyridoxal 5'-phosphate pocket.

The protein belongs to the class-III pyridoxal-phosphate-dependent aminotransferase family. ArgD subfamily. Homodimer. Pyridoxal 5'-phosphate is required as a cofactor.

The protein resides in the cytoplasm. The enzyme catalyses N(2)-acetyl-L-ornithine + 2-oxoglutarate = N-acetyl-L-glutamate 5-semialdehyde + L-glutamate. It participates in amino-acid biosynthesis; L-arginine biosynthesis; N(2)-acetyl-L-ornithine from L-glutamate: step 4/4. The chain is Acetylornithine aminotransferase from Xanthomonas axonopodis pv. citri (strain 306).